The following is a 382-amino-acid chain: Glycerate dehydrogenase (382 aa).

Residues arginine 175–isoleucine 176, cysteine 271–arginine 273, and aspartate 297 each bind NAD(+). The active site involves arginine 273. Glutamate 302 is a catalytic residue. The active-site Proton donor is the histidine 320. Histidine 320 to serine 323 lines the NAD(+) pocket.

This sequence belongs to the D-isomer specific 2-hydroxyacid dehydrogenase family.

It localises to the peroxisome. The catalysed reaction is (R)-glycerate + NAD(+) = 3-hydroxypyruvate + NADH + H(+). It functions in the pathway photosynthesis; photorespiration; 3-phospho-D-glycerate from glycine: step 3/4. The chain is Glycerate dehydrogenase (HPR-A) from Cucumis sativus (Cucumber).